A 574-amino-acid polypeptide reads, in one-letter code: Proline--tRNA ligase (574 aa).

Belongs to the class-II aminoacyl-tRNA synthetase family. ProS type 1 subfamily. Homodimer.

The protein resides in the cytoplasm. It carries out the reaction tRNA(Pro) + L-proline + ATP = L-prolyl-tRNA(Pro) + AMP + diphosphate. In terms of biological role, catalyzes the attachment of proline to tRNA(Pro) in a two-step reaction: proline is first activated by ATP to form Pro-AMP and then transferred to the acceptor end of tRNA(Pro). As ProRS can inadvertently accommodate and process non-cognate amino acids such as alanine and cysteine, to avoid such errors it has two additional distinct editing activities against alanine. One activity is designated as 'pretransfer' editing and involves the tRNA(Pro)-independent hydrolysis of activated Ala-AMP. The other activity is designated 'posttransfer' editing and involves deacylation of mischarged Ala-tRNA(Pro). The misacylated Cys-tRNA(Pro) is not edited by ProRS. In Pseudoalteromonas translucida (strain TAC 125), this protein is Proline--tRNA ligase.